The sequence spans 345 residues: MADFFSTGPGIAVLIIAQCLAVLGFVMVSLLFLVYGDRKIWAAVQMRRGPNVVGAFGLLQTVADALKYVVKEVVVPAGADKPVFMLAPMTSFVLAMIAWAVIPFNDGWVLADINVAILYVFAVSSLEVYGVIMGGWASNSKYPFLGSLRSAAQMISYEVSIGLIIIGVILSTGSMNFSAIVAAQDGDFGFFSWYWLPHLPMVFLFFISALAETNRPPFDLPEAESELVAGYQVEYSSTPFLLFMAGEYIAIFLMCALITLLFFGGWLSPIPFLPDGPIWMVGKMAFFFFLFAMVKAIVPRYRYDQLMRLGWKVFLPFSLAWVVFVAFAAQFELFGGAYARWAIGG.

The next 8 membrane-spanning stretches (helical) occupy residues 13-33 (VLII…LLFL), 84-104 (FMLA…VIPF), 115-135 (VAIL…IMGG), 161-181 (IGLI…SAIV), 190-210 (FFSW…ISAL), 248-268 (YIAI…GWLS), 278-298 (IWMV…KAIV), and 309-329 (LGWK…AFAA).

Belongs to the complex I subunit 1 family. In terms of assembly, NDH-1 is composed of 14 different subunits. Subunits NuoA, H, J, K, L, M, N constitute the membrane sector of the complex.

It localises to the cell inner membrane. It catalyses the reaction a quinone + NADH + 5 H(+)(in) = a quinol + NAD(+) + 4 H(+)(out). Functionally, NDH-1 shuttles electrons from NADH, via FMN and iron-sulfur (Fe-S) centers, to quinones in the respiratory chain. The immediate electron acceptor for the enzyme in this species is believed to be ubiquinone. Couples the redox reaction to proton translocation (for every two electrons transferred, four hydrogen ions are translocated across the cytoplasmic membrane), and thus conserves the redox energy in a proton gradient. This subunit may bind ubiquinone. The chain is NADH-quinone oxidoreductase subunit H from Dinoroseobacter shibae (strain DSM 16493 / NCIMB 14021 / DFL 12).